A 155-amino-acid polypeptide reads, in one-letter code: MQNLEGSGDGQQVEMWTDGACKGNPGPGGWGVLMRAGQHEKTMHGGERQTTNNRMELMAVIEGLRALKRPCRVTIHTDSQYVMKGMTEWLANWKRRGWRTADKKPVKNVELWQALDEQVGRHQVQWRWVRGHAGDPGNERADALANQGVEAARGR.

The RNase H type-1 domain maps to Asp-9–Glu-150. 4 residues coordinate Mg(2+): Asp-18, Glu-56, Asp-78, and Asp-142.

Belongs to the RNase H family. As to quaternary structure, monomer. Requires Mg(2+) as cofactor.

The protein localises to the cytoplasm. The catalysed reaction is Endonucleolytic cleavage to 5'-phosphomonoester.. In terms of biological role, endonuclease that specifically degrades the RNA of RNA-DNA hybrids. The protein is Ribonuclease H of Bordetella bronchiseptica (strain ATCC BAA-588 / NCTC 13252 / RB50) (Alcaligenes bronchisepticus).